The sequence spans 199 residues: NADH-quinone oxidoreductase subunit C (199 aa).

This sequence belongs to the complex I 30 kDa subunit family. NDH-1 is composed of 14 different subunits. Subunits NuoB, C, D, E, F, and G constitute the peripheral sector of the complex.

It localises to the cell inner membrane. The catalysed reaction is a quinone + NADH + 5 H(+)(in) = a quinol + NAD(+) + 4 H(+)(out). NDH-1 shuttles electrons from NADH, via FMN and iron-sulfur (Fe-S) centers, to quinones in the respiratory chain. The immediate electron acceptor for the enzyme in this species is believed to be ubiquinone. Couples the redox reaction to proton translocation (for every two electrons transferred, four hydrogen ions are translocated across the cytoplasmic membrane), and thus conserves the redox energy in a proton gradient. The polypeptide is NADH-quinone oxidoreductase subunit C (Roseobacter denitrificans (strain ATCC 33942 / OCh 114) (Erythrobacter sp. (strain OCh 114))).